The sequence spans 485 residues: Maturase K (485 aa).

This sequence belongs to the intron maturase 2 family. MatK subfamily.

The protein localises to the plastid. It is found in the chloroplast. In terms of biological role, usually encoded in the trnK tRNA gene intron. Probably assists in splicing its own and other chloroplast group II introns. This is Maturase K from Malus domestica (Apple).